The sequence spans 139 residues: uncharacterized protein (139 aa).

This is an uncharacterized protein from Invertebrate iridescent virus 3 (IIV-3).